Here is a 646-residue protein sequence, read N- to C-terminus: Phosphomethylpyrimidine synthase (646 aa).

Residues N235, M264, Y293, H329, 349 to 351 (SRG), 390 to 393 (DGLR), and E429 contribute to the substrate site. Residue H433 participates in Zn(2+) binding. A substrate-binding site is contributed by Y456. Zn(2+) is bound at residue H497. C577, C580, and C585 together coordinate [4Fe-4S] cluster.

This sequence belongs to the ThiC family. As to quaternary structure, homodimer. [4Fe-4S] cluster is required as a cofactor.

It catalyses the reaction 5-amino-1-(5-phospho-beta-D-ribosyl)imidazole + S-adenosyl-L-methionine = 4-amino-2-methyl-5-(phosphooxymethyl)pyrimidine + CO + 5'-deoxyadenosine + formate + L-methionine + 3 H(+). It functions in the pathway cofactor biosynthesis; thiamine diphosphate biosynthesis. Functionally, catalyzes the synthesis of the hydroxymethylpyrimidine phosphate (HMP-P) moiety of thiamine from aminoimidazole ribotide (AIR) in a radical S-adenosyl-L-methionine (SAM)-dependent reaction. The sequence is that of Phosphomethylpyrimidine synthase from Vibrio campbellii (strain ATCC BAA-1116).